A 319-amino-acid chain; its full sequence is ATP-dependent 6-phosphofructokinase (319 aa).

Residue glycine 11 coordinates ATP. ADP is bound at residue 21 to 25 (RAVVR). Residues 72–73 (RC) and 102–105 (GDGS) contribute to the ATP site. Aspartate 103 is a Mg(2+) binding site. Residue 125–127 (TID) participates in substrate binding. The Proton acceptor role is filled by aspartate 127. Arginine 154 lines the ADP pocket. Substrate contacts are provided by residues arginine 162 and 169–171 (MGR). ADP contacts are provided by residues 185–187 (GAE), arginine 211, and 213–215 (KKH). Residues glutamate 222, arginine 243, and 249–252 (HVQR) each bind substrate.

The protein belongs to the phosphofructokinase type A (PFKA) family. ATP-dependent PFK group I subfamily. Prokaryotic clade 'B1' sub-subfamily. Homotetramer. It depends on Mg(2+) as a cofactor.

It localises to the cytoplasm. It carries out the reaction beta-D-fructose 6-phosphate + ATP = beta-D-fructose 1,6-bisphosphate + ADP + H(+). The protein operates within carbohydrate degradation; glycolysis; D-glyceraldehyde 3-phosphate and glycerone phosphate from D-glucose: step 3/4. Its activity is regulated as follows. Allosterically activated by ADP and other diphosphonucleosides, and allosterically inhibited by phosphoenolpyruvate. Its function is as follows. Catalyzes the phosphorylation of D-fructose 6-phosphate to fructose 1,6-bisphosphate by ATP, the first committing step of glycolysis. The protein is ATP-dependent 6-phosphofructokinase of Bacillus cytotoxicus (strain DSM 22905 / CIP 110041 / 391-98 / NVH 391-98).